Consider the following 552-residue polypeptide: DNA ligase (552 aa).

Glu-244 lines the ATP pocket. Catalysis depends on Lys-246, which acts as the N6-AMP-lysine intermediate. ATP contacts are provided by Arg-251, Arg-266, Glu-296, Phe-336, Arg-408, and Lys-414.

This sequence belongs to the ATP-dependent DNA ligase family. Requires Mg(2+) as cofactor.

It catalyses the reaction ATP + (deoxyribonucleotide)n-3'-hydroxyl + 5'-phospho-(deoxyribonucleotide)m = (deoxyribonucleotide)n+m + AMP + diphosphate.. DNA ligase that seals nicks in double-stranded DNA during DNA replication, DNA recombination and DNA repair. This Methanothrix thermoacetophila (strain DSM 6194 / JCM 14653 / NBRC 101360 / PT) (Methanosaeta thermophila) protein is DNA ligase.